The following is a 375-amino-acid chain: Queuine tRNA-ribosyltransferase (375 aa).

Catalysis depends on D89, which acts as the Proton acceptor. Residues 89 to 93, D143, Q187, and G214 contribute to the substrate site; that span reads DSGGF. The interval 245–251 is RNA binding; that stretch reads GVGKPED. The active-site Nucleophile is D264. The segment at 269-273 is RNA binding; important for wobble base 34 recognition; the sequence is TRNAR. Residues C302, C304, C307, and H333 each contribute to the Zn(2+) site.

The protein belongs to the queuine tRNA-ribosyltransferase family. Homodimer. Within each dimer, one monomer is responsible for RNA recognition and catalysis, while the other monomer binds to the replacement base PreQ1. It depends on Zn(2+) as a cofactor.

It carries out the reaction 7-aminomethyl-7-carbaguanine + guanosine(34) in tRNA = 7-aminomethyl-7-carbaguanosine(34) in tRNA + guanine. It functions in the pathway tRNA modification; tRNA-queuosine biosynthesis. Its function is as follows. Catalyzes the base-exchange of a guanine (G) residue with the queuine precursor 7-aminomethyl-7-deazaguanine (PreQ1) at position 34 (anticodon wobble position) in tRNAs with GU(N) anticodons (tRNA-Asp, -Asn, -His and -Tyr). Catalysis occurs through a double-displacement mechanism. The nucleophile active site attacks the C1' of nucleotide 34 to detach the guanine base from the RNA, forming a covalent enzyme-RNA intermediate. The proton acceptor active site deprotonates the incoming PreQ1, allowing a nucleophilic attack on the C1' of the ribose to form the product. After dissociation, two additional enzymatic reactions on the tRNA convert PreQ1 to queuine (Q), resulting in the hypermodified nucleoside queuosine (7-(((4,5-cis-dihydroxy-2-cyclopenten-1-yl)amino)methyl)-7-deazaguanosine). This is Queuine tRNA-ribosyltransferase from Salmonella typhi.